Reading from the N-terminus, the 355-residue chain is Phosphate acyltransferase (355 aa).

It belongs to the PlsX family. Homodimer. Probably interacts with PlsY.

Its subcellular location is the cytoplasm. The enzyme catalyses a fatty acyl-[ACP] + phosphate = an acyl phosphate + holo-[ACP]. It functions in the pathway lipid metabolism; phospholipid metabolism. Its function is as follows. Catalyzes the reversible formation of acyl-phosphate (acyl-PO(4)) from acyl-[acyl-carrier-protein] (acyl-ACP). This enzyme utilizes acyl-ACP as fatty acyl donor, but not acyl-CoA. This is Phosphate acyltransferase from Rhodospirillum centenum (strain ATCC 51521 / SW).